The sequence spans 811 residues: Glycerol-3-phosphate acyltransferase (811 aa).

The HXXXXD motif signature appears at 303–308; the sequence is HRSHMD.

Belongs to the GPAT/DAPAT family.

The protein resides in the cell inner membrane. It carries out the reaction sn-glycerol 3-phosphate + an acyl-CoA = a 1-acyl-sn-glycero-3-phosphate + CoA. It functions in the pathway phospholipid metabolism; CDP-diacylglycerol biosynthesis; CDP-diacylglycerol from sn-glycerol 3-phosphate: step 1/3. This is Glycerol-3-phosphate acyltransferase from Haemophilus ducreyi (strain 35000HP / ATCC 700724).